Reading from the N-terminus, the 536-residue chain is Feruloyl esterase B (536 aa).

Residues 1 to 20 (MKTSIVLSIVALFLTSKASA) form the signal peptide. In terms of domain architecture, CBM10 spans 21–59 (DCWSERLGWPCCSDSNAEVIYVDDDGDWGVENNDWCGIQ). Residues 22–59 (CWSERLGWPCCSDSNAEVIYVDDDGDWGVENNDWCGIQ) form a cellulose-binding region. N-linked (GlcNAc...) asparagine glycosylation is present at N65. Tandem repeats lie at residues 78-90 (NQGG…DFGG), 91-103 (NQGG…DFGG), 104-116 (NQGG…DFGG), 117-129 (NQGG…DFGG), 134-146 (NQGG…DFGG), 151-163 (NQGG…DFGG), 164-176 (NQGG…DFGG), 181-193 (NQGG…DFGG), 194-206 (NQGG…DFGG), 211-223 (NQGG…DFGG), 224-236 (NQGG…DFGG), and 237-249 (NQGG…DFGG). Residues 78 to 249 (NQGGGMPWGD…GGMQWGDFGG (172 aa)) are 12 X 13 AA repeats of N-Q-G-G-G-M-[PQ]-W-G-D-F-G-G. The segment covering 203–252 (DFGGNQGGNQGGGMPWGDFGGNQGGGMQWGDFGGNQGGGMQWGDFGGNQG) has biased composition (gly residues). Positions 203–273 (DFGGNQGGNQ…SGPTVEYSTD (71 aa)) are disordered. Residues 257 to 536 (WGNQGGNSGP…WDFVKQFSLP (280 aa)) form a catalytic region.

As to quaternary structure, component of the multienzyme cellulase-hemicellulase complex.

The protein resides in the secreted. The catalysed reaction is feruloyl-polysaccharide + H2O = ferulate + polysaccharide.. Inhibited by the specific serine esterase inhibitor AEBSF. Its function is as follows. Involved in degradation of plant cell walls. Hydrolyzes of the feruloyl-arabinose ester bond in arabinoxylans as well as the feruloyl-galactose and feruloyl-arabinose ester bonds in pectin. This chain is Feruloyl esterase B (ESTA), found in Piromyces equi.